A 206-amino-acid chain; its full sequence is MSQPKILLLGAPGAGKGTQSSNIVDEYGVDHITTGDALRANKDMETEHGTPREFMEAGELVPDPVVNEIVQAAIDEADGFVLDGYPRNLSQAEYLSDITDVDVVALLDVGRDELVDRLTGRRMDPETGDIYHTEFNMPDDEEVRERLVQRDDDTEETVNERLDVFDENTQPVIDYYEDEGELVRIDGEASPDEVWDDLQAAIDDAL.

Residues 1–21 are disordered; the sequence is MSQPKILLLGAPGAGKGTQSS. Residue 13 to 18 participates in ATP binding; sequence GAGKGT. The segment at 33 to 61 is NMP; the sequence is TTGDALRANKDMETEHGTPREFMEAGELV. AMP contacts are provided by residues Thr-34, Arg-39, 59–61, 84–87, and Gln-91; these read ELV and GYPR. Residues 120–153 form an LID region; it reads GRRMDPETGDIYHTEFNMPDDEEVRERLVQRDDD. Residues Arg-121 and 130–131 contribute to the ATP site; that span reads IY. AMP contacts are provided by Arg-150 and Arg-161. An ATP-binding site is contributed by Ala-189.

This sequence belongs to the adenylate kinase family. Monomer.

The protein localises to the cytoplasm. The catalysed reaction is AMP + ATP = 2 ADP. It functions in the pathway purine metabolism; AMP biosynthesis via salvage pathway; AMP from ADP: step 1/1. Its function is as follows. Catalyzes the reversible transfer of the terminal phosphate group between ATP and AMP. Plays an important role in cellular energy homeostasis and in adenine nucleotide metabolism. This is Adenylate kinase from Natronomonas pharaonis (strain ATCC 35678 / DSM 2160 / CIP 103997 / JCM 8858 / NBRC 14720 / NCIMB 2260 / Gabara) (Halobacterium pharaonis).